The sequence spans 1279 residues: Botulinum-like toxin eBoNT/J (1279 aa).

His225 contacts Zn(2+). Glu226 is an active-site residue. Zn(2+) contacts are provided by His229 and Glu269. Cys424 and Cys438 are disulfide-bonded. Residues 435 to 843 (LSSCIEILED…RLTSLPVFNL (409 aa)) form a translocation domain (TD) region. A belt; not required for channel formation region spans residues 476 to 525 (ADTILDSTLSNYDFSKEINFTSTVPIITVEDPLETDEDVPVISEDRTVYV). The N-terminus of receptor binding domain (N-RBD) stretch occupies residues 860 to 1080 (IDIQDSEVLN…EVNRLYWKYF (221 aa)). The segment at 1081–1279 (EGSYLRDVWG…IPVDEGWKED (199 aa)) is C-terminus of receptor binding domain (C-RBD). The Host ganglioside-binding motif motif lies at 1250–1253 (SAWY).

It belongs to the peptidase M27 family. In terms of assembly, might be a disulfide-linked heterodimer of a light chain (LC) and heavy chain (HC). Requires Zn(2+) as cofactor.

The protein resides in the secreted. Its subcellular location is the host cytoplasm. The protein localises to the host cytosol. It localises to the host cell membrane. It is found in the host cytoplasmic vesicle membrane. The enzyme catalyses Limited hydrolysis of proteins of the neuroexocytosis apparatus, synaptobrevins, SNAP25 or syntaxin. No detected action on small molecule substrates.. Its function is as follows. Strongly resembles a botulinum-type toxin, with the appropriate domains and residues to have proteolytic function, although its C-terminus (which binds to a eukaryotic host cell) is different enough from clostrial botulinum toxins that it might bind another cell target. Might be a precursor of a toxin that binds to an unknown eukaryotic cell receptor(s), and be taken up into the host cell via the endocytic pathway. When the pH of the putative toxin-containing endosome drops a structural rearrangement occurs so that the N-terminus of the heavy chain forms pores that allows the light chain to translocate into the cytosol. Once in the cytosol the disulfide bond linking the 2 subunits is reduced and light chain cleaves its target protein. This chain is Botulinum-like toxin eBoNT/J, found in Enterococcus sp. (strain 3G1_DIV0629).